Reading from the N-terminus, the 255-residue chain is Ribosome maturation factor RimP (255 aa).

A disordered region spans residues L177 to H255. Positions D186–V202 are enriched in acidic residues. Residues P216–V230 are compositionally biased toward basic and acidic residues.

Belongs to the RimP family.

Its subcellular location is the cytoplasm. Functionally, required for maturation of 30S ribosomal subunits. This is Ribosome maturation factor RimP from Methylorubrum populi (strain ATCC BAA-705 / NCIMB 13946 / BJ001) (Methylobacterium populi).